Reading from the N-terminus, the 494-residue chain is Leucine-rich repeat extensin-like protein 4 (494 aa).

Residues 1-25 form the signal peptide; sequence MKNNTTQSLLLLLLFFFFFFEISHS. 3 N-linked (GlcNAc...) asparagine glycosylation sites follow: Asn60, Asn94, and Asn106. 9 LRR repeats span residues 121–145, 146–168, 169–193, 194–217, 219–240, 242–263, 264–287, 289–311, and 312–335; these read IRTV…LGLL, TDLA…KFKQ, LKLL…VLHL, PSLK…LFSK, LDAI…FGDS, VSVI…LVEM, KNLN…IGRL, NVTV…VGGM, and VEVE…ICQL. A glycan (N-linked (GlcNAc...) asparagine) is linked at Asn289. Asn340 carries N-linked (GlcNAc...) asparagine glycosylation. The tract at residues 404 to 494 is contains the Ser-Pro(4) repeats; the sequence is SPPIVALPPP…YASPPPPPFY (91 aa). Residues 422–479 show a composition bias toward pro residues; the sequence is PPVYSPPPSPPVFSPPPSPPVYSPPPPPSIHYSSPPPPPVHHSSPPPPSPEFEGPLPP. The interval 422–482 is disordered; that stretch reads PPVYSPPPSP…FEGPLPPVIG (61 aa).

In terms of processing, hydroxylated on proline residues in the S-P-P-P-P repeat. Post-translationally, O-glycosylated on hydroxyprolines. As to expression, expressed in roots, stems, leaves and flowers, mostly in vascular tissues.

It localises to the secreted. The protein resides in the cell wall. Modulates cell morphogenesis by regulating cell wall formation and assembly, and/or growth polarization. The chain is Leucine-rich repeat extensin-like protein 4 (LRX4) from Arabidopsis thaliana (Mouse-ear cress).